Consider the following 577-residue polypeptide: Arginine--tRNA ligase (577 aa).

Positions 122-132 (PNVAKEMHVGH) match the 'HIGH' region motif.

It belongs to the class-I aminoacyl-tRNA synthetase family. Monomer.

The protein resides in the cytoplasm. The catalysed reaction is tRNA(Arg) + L-arginine + ATP = L-arginyl-tRNA(Arg) + AMP + diphosphate. In Haemophilus influenzae (strain PittGG), this protein is Arginine--tRNA ligase.